Consider the following 463-residue polypeptide: Putative glycine--tRNA ligase, cytoplasmic (463 aa).

Positions threonine 25–glutamate 54 are disordered. A compositionally biased stretch (basic and acidic residues) spans asparagine 44 to glutamate 54. Positions 153 and 239 each coordinate substrate. ATP-binding positions include arginine 271–glutamate 273 and leucine 281–phenylalanine 286. Residues phenylalanine 286 to glutamate 290 and asparagine 376 each bind substrate. Glutamate 398–cysteine 399 is a binding site for ATP.

It belongs to the class-II aminoacyl-tRNA synthetase family. As to quaternary structure, homodimer.

It is found in the cytoplasm. The catalysed reaction is tRNA(Gly) + glycine + ATP = glycyl-tRNA(Gly) + AMP + diphosphate. Functionally, catalyzes the attachment of glycine to tRNA(Gly). Is also able produce diadenosine tetraphosphate (Ap4A), a universal pleiotropic signaling molecule needed for cell regulation pathways, by direct condensation of 2 ATPs. The polypeptide is Putative glycine--tRNA ligase, cytoplasmic (Arabidopsis thaliana (Mouse-ear cress)).